Reading from the N-terminus, the 235-residue chain is PRA1 family protein 1 (235 aa).

Positions 1–17 are enriched in polar residues; the sequence is MESNSNSNETMYGNPNI. Positions 1 to 55 are disordered; it reads MESNSNSNETMYGNPNINMGFVDSGNSNIGNNTGSMSPPPQQQQQPQQASSTPAG. Low complexity predominate over residues 24 to 48; sequence SGNSNIGNNTGSMSPPPQQQQQPQQ. Helical transmembrane passes span 144–164 and 187–207; these read SVFFIITNPFYLLLLGVLLFI and AFLSIYFLLYAGSSIFWLVGA.

The protein belongs to the PRA1 family.

The protein resides in the membrane. Its function is as follows. May act as a general Rab protein regulator. This is PRA1 family protein 1 (prafA) from Dictyostelium discoideum (Social amoeba).